We begin with the raw amino-acid sequence, 411 residues long: UPF0597 protein Fnod_1278 (411 aa).

It belongs to the UPF0597 family.

The polypeptide is UPF0597 protein Fnod_1278 (Fervidobacterium nodosum (strain ATCC 35602 / DSM 5306 / Rt17-B1)).